The chain runs to 624 residues: Chaperone protein HtpG (624 aa).

An a; substrate-binding region spans residues 1-338 (MNNKNKITHT…SQDLPLNISR (338 aa)). The tract at residues 339-552 (EILQDSSITH…TNDMSTQMAK (214 aa)) is b. Residues 553 to 624 (IFSAAGQPIP…IQRINNFFIS (72 aa)) are c.

The protein belongs to the heat shock protein 90 family. Homodimer.

The protein localises to the cytoplasm. Functionally, molecular chaperone. Has ATPase activity. The sequence is that of Chaperone protein HtpG from Buchnera aphidicola subsp. Cinara cedri (strain Cc).